Reading from the N-terminus, the 459-residue chain is Chromosomal replication initiator protein DnaA (459 aa).

Residues 1-74 (MMEMPIDNLW…ANVVQSILGH (74 aa)) form a domain I, interacts with DnaA modulators region. The segment at 74 to 117 (HPVEIYITVAKGEEFEEIGGGGEWELPTTNIINETPNQNRQPNT) is domain II. The tract at residues 118-334 (ELNAKYVFSR…GALTRALAYI (217 aa)) is domain III, AAA+ region. ATP is bound by residues Gly162, Gly164, Lys165, and Thr166. Residues 335 to 459 (SIWGLPMTVA…IKMNSRSRKP (125 aa)) form a domain IV, binds dsDNA region.

This sequence belongs to the DnaA family. In terms of assembly, oligomerizes as a right-handed, spiral filament on DNA at oriC.

It is found in the cytoplasm. In terms of biological role, plays an essential role in the initiation and regulation of chromosomal replication. ATP-DnaA binds to the origin of replication (oriC) to initiate formation of the DNA replication initiation complex once per cell cycle. Binds the DnaA box (a 9 base pair repeat at the origin) and separates the double-stranded (ds)DNA. Forms a right-handed helical filament on oriC DNA; dsDNA binds to the exterior of the filament while single-stranded (ss)DNA is stabiized in the filament's interior. The ATP-DnaA-oriC complex binds and stabilizes one strand of the AT-rich DNA unwinding element (DUE), permitting loading of DNA polymerase. After initiation quickly degrades to an ADP-DnaA complex that is not apt for DNA replication. Binds acidic phospholipids. The sequence is that of Chromosomal replication initiator protein DnaA from Nostoc sp. (strain PCC 7120 / SAG 25.82 / UTEX 2576).